The sequence spans 246 residues: Probable H/ACA ribonucleoprotein complex subunit 1-like protein (246 aa).

Disordered stretches follow at residues 1-61 and 155-246; these read MSFR…GGYD and PQVG…TKFD. RGG-box stretches follow at residues 4–59 and 161–223; these read RGGR…GRGG and RGRG…RGRG. Residues 168–180 show a composition bias toward basic and acidic residues; the sequence is RGGDRGRGGDRGR. Gly residues predominate over residues 181-221; sequence GGFGGRGGGGGGFRGGSRGGFGGGDRGGFRGGRGGDFGGRG.

This sequence belongs to the GAR1 family. Component of the small nucleolar ribonucleoprotein particle containing H/ACA-type snoRNAs (H/ACA snoRNPs).

The protein resides in the nucleus. The protein localises to the nucleolus. Functionally, required for ribosome biogenesis. Part of a complex which catalyzes pseudouridylation of rRNA. This involves the isomerization of uridine such that the ribose is subsequently attached to C5, instead of the normal N1. Pseudouridine ('psi') residues may serve to stabilize the conformation of rRNAs. This chain is Probable H/ACA ribonucleoprotein complex subunit 1-like protein, found in Caenorhabditis briggsae.